The chain runs to 169 residues: uncharacterized protein (169 aa).

2 helical membrane passes run 62-84 and 94-116; these read RWGF…LLGL and ALML…YWWF.

Its subcellular location is the cell membrane. This is an uncharacterized protein from Archaeoglobus fulgidus (strain ATCC 49558 / DSM 4304 / JCM 9628 / NBRC 100126 / VC-16).